The primary structure comprises 141 residues: Auxin-responsive protein SAUR63 (141 aa).

This sequence belongs to the ARG7 family. In terms of tissue distribution, expressed in hypocotyls, cotyledons, petioles, young rosette leaves, apical portion of inflorescence stems, stamen filaments and petals.

The protein localises to the cell membrane. Functionally, may promote auxin-stimulated organ elongation, such as hypocotyls, stamen filaments and petals. This is Auxin-responsive protein SAUR63 from Arabidopsis thaliana (Mouse-ear cress).